Consider the following 335-residue polypeptide: Corrinoid adenosyltransferase PduO (335 aa).

A heme-binding site is contributed by histidine 206.

The protein belongs to the Cob(I)alamin adenosyltransferase family. PduO subfamily. In terms of assembly, forms a complex with PduS. Heme b serves as cofactor. Mg(2+) is required as a cofactor.

Its subcellular location is the bacterial microcompartment. The enzyme catalyses cob(I)alamin-[corrinoid adenosyltransferase] + ATP = apo-[corrinoid adenosyltransferase] + adenosylcob(III)alamin + triphosphate. The protein operates within polyol metabolism; 1,2-propanediol degradation. It participates in cofactor biosynthesis; adenosylcobalamin biosynthesis. Converts cob(I)alamin to adenosylcobalamin (adenosylcob(III)alamin), the cofactor for propanediol dehydratase. Found in the bacterial microcompartment (BMC) dedicated to 1,2-propanediol (1,2-PD) degradation. PduS and PduO allow regeneration of the adenosylcobalamin cofactor within the BMC. Its function is as follows. Expression of a cosmid containing the full 21-gene pdu operon in E.coli allows E.coli to grow on 1,2-propanediol (1,2-PD) with the appearance of bacterial microcompartments (BMC) in its cytoplasm. Functionally, the 1,2-PD-specific bacterial microcompartment (BMC) concentrates low levels of 1,2-PD catabolic enzymes, concentrates volatile reaction intermediates thus enhancing pathway flux and keeps the level of toxic, mutagenic propionaldehyde low. The sequence is that of Corrinoid adenosyltransferase PduO from Citrobacter freundii.